A 600-amino-acid polypeptide reads, in one-letter code: UvrABC system protein C (600 aa).

Positions 16 to 94 constitute a GIY-YIG domain; sequence EKPGCYQYFD…IKEYQPRYNV (79 aa). The 36-residue stretch at 208-243 folds into the UVR domain; sequence HRLVRMYRDRMQAYSEELRFEEAQICKERIELLERY.

It belongs to the UvrC family. In terms of assembly, interacts with UvrB in an incision complex.

The protein localises to the cytoplasm. In terms of biological role, the UvrABC repair system catalyzes the recognition and processing of DNA lesions. UvrC both incises the 5' and 3' sides of the lesion. The N-terminal half is responsible for the 3' incision and the C-terminal half is responsible for the 5' incision. This is UvrABC system protein C from Porphyromonas gingivalis (strain ATCC 33277 / DSM 20709 / CIP 103683 / JCM 12257 / NCTC 11834 / 2561).